We begin with the raw amino-acid sequence, 181 residues long: MKILFCDVLLLSLLSSVFSSCPEDCLTCQERLHPAPGSFNLKLCILQCEEKVFPRPLWTLCTKAMASDSEQLSPADPELTSAALYQSKASEMQHLKRMPRVRSVVQARDAEPEADAEPVADEADEVEQKQLQKRFGGFTGARKSARKLANQKRFSEFMRQYLVLSMQSSQRRRTLHQNGNV.

Positions 1-19 (MKILFCDVLLLSLLSSVFS) are cleaved as a signal peptide. Positions 20–95 (SCPEDCLTCQ…QSKASEMQHL (76 aa)) are excised as a propeptide. The disordered stretch occupies residues 103–125 (SVVQARDAEPEADAEPVADEADE). 2 tandem repeats follow at residues 109–114 (DAEPEA) and 115–120 (DAEPVA). Residues 109 to 120 (DAEPEADAEPVA) form a 2 X 6 AA tandem repeats of D-A-E-P-X-A region. The segment covering 112-125 (PEADAEPVADEADE) has biased composition (acidic residues). Positions 174-181 (TLHQNGNV) are excised as a propeptide.

The protein belongs to the opioid neuropeptide precursor family. Post-translationally, specific enzymatic cleavages at paired basic residues probably yield other active peptides besides nociceptin. In terms of processing, the N-terminal domain contains 6 conserved cysteines thought to be involved in disulfide bonding and/or processing. In terms of tissue distribution, expressed predominantly in the spinal cord and brain, being more abundant in the hypothalamus and striatum. Also found in small amounts in ovary.

The protein resides in the secreted. In terms of biological role, ligand of the opioid receptor-like receptor OPRL1. It may act as a transmitter in the brain by modulating nociceptive and locomotor behavior. May be involved in neuronal differentiation and development. Blocks nociceptin action in pain transmission by inhibiting nociceptin-induced hyperalgesia and allodynia. Its function is as follows. Has potent analgesic activity. This is Prepronociceptin (Pnoc) from Rattus norvegicus (Rat).